The following is a 180-amino-acid chain: Homeobox protein ceh-12 (180 aa).

The interval 15-37 (SSQNEDQKLESHPSPPSQIPNYS) is disordered. Residues 110 to 169 (MRRPRTAFSSEQLVQLEKQFSDNRYLSRPRRYQLAQQLSLSETQIKIWFQNRRMKNKRCP) constitute a DNA-binding region (homeobox).

Expressed in VB motor neurons in the ventral nerve cord.

The protein resides in the nucleus. Functionally, transcription factor. Plays a role, downstream from homeobox protein unc-4 and Wnt signaling, in specifying synaptic inputs to A-class motor neurons. Involved in patterning of the synaptic outputs of the postmitotic DA class cholinergic motor neurons. The chain is Homeobox protein ceh-12 (ceh-12) from Caenorhabditis elegans.